Consider the following 350-residue polypeptide: Phenylalanine--tRNA ligase alpha subunit (350 aa).

Glutamate 257 is a binding site for Mg(2+).

Belongs to the class-II aminoacyl-tRNA synthetase family. Phe-tRNA synthetase alpha subunit type 1 subfamily. Tetramer of two alpha and two beta subunits. The cofactor is Mg(2+).

Its subcellular location is the cytoplasm. The catalysed reaction is tRNA(Phe) + L-phenylalanine + ATP = L-phenylalanyl-tRNA(Phe) + AMP + diphosphate + H(+). This is Phenylalanine--tRNA ligase alpha subunit from Listeria monocytogenes serotype 4b (strain CLIP80459).